We begin with the raw amino-acid sequence, 131 residues long: Large ribosomal subunit protein bL19 (131 aa).

The interval 107–131 is disordered; it reads GKSARIAERAERGSDKGKAAPAAAE. Residues 111–124 show a composition bias toward basic and acidic residues; sequence RIAERAERGSDKGK.

Belongs to the bacterial ribosomal protein bL19 family.

Functionally, this protein is located at the 30S-50S ribosomal subunit interface and may play a role in the structure and function of the aminoacyl-tRNA binding site. The protein is Large ribosomal subunit protein bL19 of Methylobacterium sp. (strain 4-46).